Here is a 143-residue protein sequence, read N- to C-terminus: Cofilin/actin-depolymerizing factor homolog 2 (143 aa).

The region spanning 4 to 141 is the ADF-H domain; sequence GVKVSDECVY…FEDELRTIIL (138 aa).

This sequence belongs to the actin-binding proteins ADF family. In terms of assembly, interacts with monomeric actin, does not bind to actin polymers.

It is found in the cytoplasm. Its subcellular location is the cytoskeleton. Functionally, not involved in actin polymerisation, instead functions to stimulate nucleotide exchange on monomeric actin and influence turnover of the small amount of cytosolic actin microfilaments. Essential for erythrocytic schizogony. The chain is Cofilin/actin-depolymerizing factor homolog 2 from Plasmodium falciparum (isolate 3D7).